A 159-amino-acid polypeptide reads, in one-letter code: C-type lectin BJcuL (159 aa).

A signal peptide spans M1–G24. Intrachain disulfides connect C27–C38, C55–C155, C62–C157, and C130–C147. Positions M34–Q156 constitute a C-type lectin domain. Residues Q120, D122, E128, N143, and D144 each coordinate Ca(2+). Positions Q120 to D122 match the Galactose-binding motif.

It belongs to the true venom lectin family. As to quaternary structure, homodecamer of disulfide-linked dimers arranged in two 5-fold symmetric pentamers. Binds the gentamicin group of aminoglycoside antibiotics at the dimeric interface near the intermolecular disulfide bond. In terms of tissue distribution, expressed by the venom gland.

It is found in the secreted. Its activity is regulated as follows. Hemagglutination activity is inhibited by lactose (MIC=2.5 mM), galactose (MIC=10 mM), and raffinose. Is very weakly or not inhibited by gentamicin, kanamycin, glucose and sucrose. Galactose-binding lectin which recognizes specific carbohydrate structures and agglutinates a variety of animal cells by binding to cell-surface glycoproteins and glycolipids. Calcium-dependent lectin. Also binds lactose and raffinose. Shows high hemagglutinating activity on mammalian erythrocytes. It also involved in immunological functions, since it is able of inducing potent neutrophil activation. In vivo, it causes edema and increases vascular permeability after injection into mouse hind paws (10-100 ug/paw). In anesthetized rats, it decreases the blood pressure by approximately 15%, with a rapid return to the resting level. Is an effective inhibitor of cell growth in some cancer cell lines, especially against renal and pancreatic cancer cell lines, human breast and ovarian carcinoma, glioblastoma and a bovine brain microvascular endothelial cell line. This Bothrops jararacussu (Jararacussu) protein is C-type lectin BJcuL.